The chain runs to 330 residues: Peroxidase N1 (330 aa).

Residues 1–29 (MEYYHHSINKMAMFMVILVLAIDVTMVLG) form the signal peptide. Pyrrolidone carboxylic acid is present on Q30. 4 disulfide bridges follow: C41/C117, C74/C79, C123/C326, and C201/C233. H72 functions as the Proton acceptor in the catalytic mechanism. Positions 73, 76, 78, 80, and 82 each coordinate Ca(2+). A substrate-binding site is contributed by P164. Residue H194 participates in heme b binding. T195 is a binding site for Ca(2+). N212 carries N-linked (GlcNAc...) asparagine glycosylation. D246 and D254 together coordinate Ca(2+).

This sequence belongs to the peroxidase family. Classical plant (class III) peroxidase subfamily. Ca(2+) serves as cofactor. It depends on heme b as a cofactor. Expressed at a high level in roots and at a trace level in lower leaves. Not expressed in upper leaves, stems, flowers, seeds and shoot apices.

It localises to the secreted. The enzyme catalyses 2 a phenolic donor + H2O2 = 2 a phenolic radical donor + 2 H2O. In terms of biological role, removal of H(2)O(2), oxidation of toxic reductants, biosynthesis and degradation of lignin, suberization, auxin catabolism, response to environmental stresses such as wounding, pathogen attack and oxidative stress. These functions might be dependent on each isozyme/isoform in each plant tissue. Can use NADH, NADPH and monolignols as substrates. The sequence is that of Peroxidase N1 from Nicotiana tabacum (Common tobacco).